A 1047-amino-acid polypeptide reads, in one-letter code: Atrial natriuretic peptide receptor 2 (1047 aa).

The N-terminal stretch at 1-22 (MALPSLLLLVAALAGGVRPPGA) is a signal peptide. Topologically, residues 23–458 (RNLTLAVVLP…DKTPLSTLAI (436 aa)) are extracellular. Residues N24 and N35 are each glycosylated (N-linked (GlcNAc...) asparagine). Cysteines 75 and 101 form a disulfide. 5 N-linked (GlcNAc...) asparagine glycosylation sites follow: N161, N195, N244, N277, and N349. A helical transmembrane segment spans residues 459-478 (VALGTGITFIMFGVSSFLIF). At 479-1047 (RKLMLEKELA…GERKGPPGLL (569 aa)) the chain is on the cytoplasmic side. At S513 the chain carries Phosphoserine. The region spanning 513–786 (SRLTLSLRGS…PDFGQIKGFI (274 aa)) is the Protein kinase domain. Phosphothreonine is present on T516. 4 positions are modified to phosphoserine: S518, S522, S523, and S526. T529 bears the Phosphothreonine mark. The Guanylate cyclase domain occupies 861 to 991 (TIYFSDIVGF…DTVNTASRME (131 aa)).

Belongs to the adenylyl cyclase class-4/guanylyl cyclase family. In terms of processing, phosphorylated. Phosphorylation of the protein kinase-like domain is required for full activation by CNP. Post-translationally, glycosylated.

The protein resides in the cell membrane. The catalysed reaction is GTP = 3',5'-cyclic GMP + diphosphate. In terms of biological role, receptor for the C-type natriuretic peptide NPPC/CNP hormone. Has guanylate cyclase activity upon binding of its ligand. May play a role in the regulation of skeletal growth. This Homo sapiens (Human) protein is Atrial natriuretic peptide receptor 2 (NPR2).